Consider the following 187-residue polypeptide: MLVLLNKPYGVLSQFSDRSTPPKRTLAEFGLPPQVYAAGRLDHDSEGLLLLTDDGPLAHRLTDPRHKQPKTYWVQVEGDPDTSQLQALCDGVLLNDGPTRPANVRRLECAPTLWPRDPPVRVRKTVPDAWLEVQITEGRNRQVRRMTASVGLPTLRLVRVAIGAWSLASLQPGQWRVDDARAVRPAR.

Residue D42 is the Nucleophile of the active site.

This sequence belongs to the pseudouridine synthase RsuA family.

The enzyme catalyses uridine(2457) in 23S rRNA = pseudouridine(2457) in 23S rRNA. Its function is as follows. Responsible for synthesis of pseudouridine from uracil-2457 in 23S ribosomal RNA. In Xanthomonas campestris pv. campestris (strain ATCC 33913 / DSM 3586 / NCPPB 528 / LMG 568 / P 25), this protein is Ribosomal large subunit pseudouridine synthase E (rluE).